Here is a 348-residue protein sequence, read N- to C-terminus: Glucokinase (348 aa).

14-19 (GDVGGS) is an ATP binding site. The segment at 327 to 348 (SDPAPVAAPTHPRGGTAGDMHA) is disordered.

Belongs to the bacterial glucokinase family.

Its subcellular location is the cytoplasm. The catalysed reaction is D-glucose + ATP = D-glucose 6-phosphate + ADP + H(+). The sequence is that of Glucokinase from Chromobacterium violaceum (strain ATCC 12472 / DSM 30191 / JCM 1249 / CCUG 213 / NBRC 12614 / NCIMB 9131 / NCTC 9757 / MK).